The following is a 592-amino-acid chain: 2-succinyl-5-enolpyruvyl-6-hydroxy-3-cyclohexene-1-carboxylate synthase (592 aa).

It belongs to the TPP enzyme family. MenD subfamily. As to quaternary structure, homodimer. The cofactor is Mg(2+). Mn(2+) serves as cofactor. Thiamine diphosphate is required as a cofactor.

It catalyses the reaction isochorismate + 2-oxoglutarate + H(+) = 5-enolpyruvoyl-6-hydroxy-2-succinyl-cyclohex-3-ene-1-carboxylate + CO2. Its pathway is quinol/quinone metabolism; 1,4-dihydroxy-2-naphthoate biosynthesis; 1,4-dihydroxy-2-naphthoate from chorismate: step 2/7. It functions in the pathway quinol/quinone metabolism; menaquinone biosynthesis. Functionally, catalyzes the thiamine diphosphate-dependent decarboxylation of 2-oxoglutarate and the subsequent addition of the resulting succinic semialdehyde-thiamine pyrophosphate anion to isochorismate to yield 2-succinyl-5-enolpyruvyl-6-hydroxy-3-cyclohexene-1-carboxylate (SEPHCHC). The sequence is that of 2-succinyl-5-enolpyruvyl-6-hydroxy-3-cyclohexene-1-carboxylate synthase from Leifsonia xyli subsp. xyli (strain CTCB07).